A 423-amino-acid chain; its full sequence is COP9 signalosome complex subunit 3 (423 aa).

Residues 197–365 (NFERALYFFE…GMVCFHDNPE (169 aa)) form the PCI domain. The interval 402 to 423 (QFVQKSMGTQEDDVGSKTSSYS) is disordered.

It belongs to the CSN3 family. As to quaternary structure, component of the CSN complex, probably composed of cops1, cops2, cops3, cops4, cops5, cops6, cops7, cops8 and cops9.

The protein resides in the cytoplasm. It is found in the nucleus. Its function is as follows. Component of the COP9 signalosome complex (CSN), a complex involved in various cellular and developmental processes. The CSN complex is an essential regulator of the ubiquitin (Ubl) conjugation pathway by mediating the deneddylation of the cullin subunits of E3 ligase complexes, leading to modify the Ubl ligase activity. The sequence is that of COP9 signalosome complex subunit 3 (cops3) from Danio rerio (Zebrafish).